We begin with the raw amino-acid sequence, 563 residues long: Arginine--tRNA ligase (563 aa).

The 'HIGH' region signature appears at 121 to 131 (PNIAKPFSIGH).

This sequence belongs to the class-I aminoacyl-tRNA synthetase family. In terms of assembly, monomer.

The protein localises to the cytoplasm. The catalysed reaction is tRNA(Arg) + L-arginine + ATP = L-arginyl-tRNA(Arg) + AMP + diphosphate. This Streptococcus pyogenes serotype M4 (strain MGAS10750) protein is Arginine--tRNA ligase.